A 581-amino-acid chain; its full sequence is Potassium-transporting ATPase potassium-binding subunit (581 aa).

The next 12 helical transmembrane spans lie at 2–22 (LQGW…TPFF), 74–94 (AVIA…PLNP), 135–155 (GLGY…IAFI), 177–197 (ILLP…VPET), 255–275 (LVQL…YGVF), 284–304 (LIYL…AIGE), 332–352 (WAQS…AVIA), 357–377 (LMPN…VFGG), 381–401 (GTAY…LMVG), 421–441 (FLIL…ALAF), 501–521 (LSAC…LLLL), and 550–570 (AGVI…LGPI).

This sequence belongs to the KdpA family. In terms of assembly, the system is composed of three essential subunits: KdpA, KdpB and KdpC.

It is found in the cell inner membrane. Functionally, part of the high-affinity ATP-driven potassium transport (or Kdp) system, which catalyzes the hydrolysis of ATP coupled with the electrogenic transport of potassium into the cytoplasm. This subunit binds the periplasmic potassium ions and delivers the ions to the membrane domain of KdpB through an intramembrane tunnel. The sequence is that of Potassium-transporting ATPase potassium-binding subunit from Microcystis aeruginosa (strain NIES-843 / IAM M-2473).